The chain runs to 61 residues: Large ribosomal subunit protein bL32 (61 aa).

Residues 1–19 (MAHPKRRQSKTRTAKRRTH) are compositionally biased toward basic residues. Positions 1–20 (MAHPKRRQSKTRTAKRRTHD) are disordered.

This sequence belongs to the bacterial ribosomal protein bL32 family.

The protein is Large ribosomal subunit protein bL32 of Bacteroides fragilis (strain YCH46).